The following is a 305-amino-acid chain: Foldase protein PrsA (305 aa).

Positions Met1–Gly19 are cleaved as a signal peptide. A lipid anchor (N-palmitoyl cysteine) is attached at Cys20. A lipid anchor (S-diacylglycerol cysteine) is attached at Cys20. One can recognise a PpiC domain in the interval Glu136–Lys235.

This sequence belongs to the PrsA family.

Its subcellular location is the cell membrane. The enzyme catalyses [protein]-peptidylproline (omega=180) = [protein]-peptidylproline (omega=0). Plays a major role in protein secretion by helping the post-translocational extracellular folding of several secreted proteins. The sequence is that of Foldase protein PrsA from Levilactobacillus brevis (strain ATCC 367 / BCRC 12310 / CIP 105137 / JCM 1170 / LMG 11437 / NCIMB 947 / NCTC 947) (Lactobacillus brevis).